The primary structure comprises 256 residues: uncharacterized protein (256 aa).

The next 7 helical transmembrane spans lie at 32–52, 59–79, 112–132, 156–176, 184–204, 207–227, and 230–250; these read ILASIFIGFGITAASKTGSYF, FAFPAAAVTFGAAILMIAYGG, YAGNLIGAILFAILISATGLF, LFFRGMLCNWLVCLAFFIPMS, LFTMMLFVFCFFISGFEHSIA, CTFAISLLIEHPDTVTLMGAV, and LIPVTLGNLTAGIVMMGWMYY.

Belongs to the FNT transporter (TC 1.A.16) family.

It localises to the cell membrane. This is an uncharacterized protein from Bacillus subtilis (strain 168).